A 236-amino-acid polypeptide reads, in one-letter code: UPF0257 lipoprotein YnfC (236 aa).

The signal sequence occupies residues 1–16 (MKKPLLLTLLCMILAG). A lipid anchor (N-palmitoyl cysteine) is attached at Cys17. Cys17 carries the S-diacylglycerol cysteine lipid modification.

It belongs to the UPF0257 family.

It localises to the cell membrane. In Salmonella typhi, this protein is UPF0257 lipoprotein YnfC.